The chain runs to 465 residues: Cysteine--tRNA ligase (465 aa).

C29 is a binding site for Zn(2+). Residues 31–41 carry the 'HIGH' region motif; sequence ITPYDEVHLGH. Zn(2+)-binding residues include C212, H237, and E241. Residues 269 to 273 carry the 'KMSKS' region motif; that stretch reads KMSKS. K272 contributes to the ATP binding site.

This sequence belongs to the class-I aminoacyl-tRNA synthetase family. Monomer. Zn(2+) serves as cofactor.

It localises to the cytoplasm. The catalysed reaction is tRNA(Cys) + L-cysteine + ATP = L-cysteinyl-tRNA(Cys) + AMP + diphosphate. The sequence is that of Cysteine--tRNA ligase from Endomicrobium trichonymphae.